The following is a 466-amino-acid chain: MSTENDYIVADIGLADFGRKEITIAETEMPGLMACRAEFGETKPLKGARITGSLHMTIQTAVLIETLVALGAEVRWASCNIFSTQDHAAAAIAASGVPVYAIKGESLEDYWIYTDKIFQWADGGFSNMILDDGGDATMYILLGARAEAGEDVLSDPHSEEEEILFAQIKKRLKASPGWFTKQRDAIKGVTEETTTGVNRLYQLSQKGLLPFPAINVNDSVTKSKFDNKYGCKESLVDGIRRATDVMMAGKVAVVCGYGDVGKGSAASLSGAGARVKVTEVDPICALQAAMDGYEVVLLEDVVSSADIFISTTGNKDVIRIDHMRAMKDMAIVGNIGHFDNEIQVAALRNLKWTNVKPQVDLIEFAKGNRIILLSEGRLLNLGNATGHPSFVMSASFTNQTLAQIELFTKPGQYQNQVYVLPKHLDEKVARLHLGKLGVKLTELSGEQAAYIGVTPQGPFKSDHYRY.

Thr-57, Asp-132, and Glu-192 together coordinate substrate. 193–195 (TTT) provides a ligand contact to NAD(+). Residues Lys-222 and Asp-226 each contribute to the substrate site. Residues Asn-227, 256-261 (GYGDVG), Glu-279, Asn-314, 335-337 (IGH), and Asn-380 each bind NAD(+).

Belongs to the adenosylhomocysteinase family. Requires NAD(+) as cofactor.

It localises to the cytoplasm. The enzyme catalyses S-adenosyl-L-homocysteine + H2O = L-homocysteine + adenosine. It functions in the pathway amino-acid biosynthesis; L-homocysteine biosynthesis; L-homocysteine from S-adenosyl-L-homocysteine: step 1/1. In terms of biological role, may play a key role in the regulation of the intracellular concentration of adenosylhomocysteine. The polypeptide is Adenosylhomocysteinase (Rhizobium rhizogenes (strain K84 / ATCC BAA-868) (Agrobacterium radiobacter)).